A 192-amino-acid polypeptide reads, in one-letter code: Pyridoxal 5'-phosphate synthase subunit PdxT (192 aa).

46 to 48 (GES) contacts L-glutamine. Residue Cys75 is the Nucleophile of the active site. L-glutamine contacts are provided by residues Arg101 and 129 to 130 (IR). Residues His166 and Glu168 each act as charge relay system in the active site.

Belongs to the glutaminase PdxT/SNO family. In the presence of PdxS, forms a dodecamer of heterodimers. Only shows activity in the heterodimer.

The enzyme catalyses aldehydo-D-ribose 5-phosphate + D-glyceraldehyde 3-phosphate + L-glutamine = pyridoxal 5'-phosphate + L-glutamate + phosphate + 3 H2O + H(+). The catalysed reaction is L-glutamine + H2O = L-glutamate + NH4(+). Its pathway is cofactor biosynthesis; pyridoxal 5'-phosphate biosynthesis. Its function is as follows. Catalyzes the hydrolysis of glutamine to glutamate and ammonia as part of the biosynthesis of pyridoxal 5'-phosphate. The resulting ammonia molecule is channeled to the active site of PdxS. In Staphylococcus carnosus (strain TM300), this protein is Pyridoxal 5'-phosphate synthase subunit PdxT.